A 453-amino-acid polypeptide reads, in one-letter code: Aldehyde dehydrogenase, dimeric NADP-preferring (453 aa).

Ser-2 carries the N-acetylserine modification. At Lys-178 the chain carries N6-acetyllysine. 188-193 (GSTAVG) serves as a coordination point for NAD(+). Lys-194 carries the post-translational modification N6-acetyllysine. Catalysis depends on residues Glu-210 and Cys-244.

This sequence belongs to the aldehyde dehydrogenase family. Homodimer.

The protein localises to the cytoplasm. The enzyme catalyses an aldehyde + NAD(+) + H2O = a carboxylate + NADH + 2 H(+). The catalysed reaction is octanal + NAD(+) + H2O = octanoate + NADH + 2 H(+). ALDHs play a major role in the detoxification of alcohol-derived acetaldehyde. They are involved in the metabolism of corticosteroids, biogenic amines, neurotransmitters, and lipid peroxidation. Oxidizes medium and long chain aldehydes into non-toxic fatty acids. Preferentially oxidizes aromatic aldehyde substrates. Comprises about 50 percent of corneal epithelial soluble proteins. May play a role in preventing corneal damage caused by ultraviolet light. In Rattus norvegicus (Rat), this protein is Aldehyde dehydrogenase, dimeric NADP-preferring (Aldh3a1).